Consider the following 521-residue polypeptide: MTNIHNDKILILDFGAQYTQLIARRIRELGVYCEIWAWDHNPAEIAGFGAKGIILSGGPESTTLPGAPAAPQEVFDSGLPIFGICYGMQTLAAQLGGATEAADQREFGHAEVNVINPDALFKGLSDHGGEPKLNVWMSHGDHVSVAPPGFTITATTDRIPVAAMANEEKRWYGVQFHPEVTHTLQGQALLRRFVVDVCGCQTLWTAANIIDDQITRVREQVGDDEVILGLSGGVDSSVVAALLHKAIGEKLTCVFVDTGLLRWQEGDQVMAMFAEHMGVKVVRVNAADRYFAALEGVSDPEAKRKIIGNLFVEIFDEESNKLKNAKWLAQGTIYPDVIESAGSKTGKAHVIKSHHNVGGLPEHMKLGLVEPLRELFKDEVRRLGVELGLPRTMVYRHPFPGPGLGVRILGEVKREYAELLAKADAIFIDELRKADLYDKTSQAFAVFLPVKSVGVVGDARAYEWVIALRAVETIDFMTAHWAHLPYEFLGTVSNRIINELRGVSRVVYDISGKPPATIEWE.

In terms of domain architecture, Glutamine amidotransferase type-1 spans 8–203 (KILILDFGAQ…VVDVCGCQTL (196 aa)). The active-site Nucleophile is Cys85. Active-site residues include His177 and Glu179. A GMPS ATP-PPase domain is found at 204 to 396 (WTAANIIDDQ…LGLPRTMVYR (193 aa)). ATP is bound at residue 231–237 (SGGVDSS).

In terms of assembly, homodimer.

It carries out the reaction XMP + L-glutamine + ATP + H2O = GMP + L-glutamate + AMP + diphosphate + 2 H(+). It participates in purine metabolism; GMP biosynthesis; GMP from XMP (L-Gln route): step 1/1. Its function is as follows. Catalyzes the synthesis of GMP from XMP. The chain is GMP synthase [glutamine-hydrolyzing] from Stenotrophomonas maltophilia (strain R551-3).